Reading from the N-terminus, the 71-residue chain is Defensin-like protein 124 (71 aa).

The signal sequence occupies residues 1–25 (MSKPTVIVIFMAILVLGMATKETQG). 4 cysteine pairs are disulfide-bonded: Cys28–Cys71, Cys40–Cys60, Cys45–Cys65, and Cys49–Cys67.

The protein belongs to the DEFL family.

The protein localises to the secreted. This is Defensin-like protein 124 (LCR16) from Arabidopsis thaliana (Mouse-ear cress).